The following is a 339-amino-acid chain: MKETLDQLMQSALAEIAGAASEDALQELRVRYLGKKGELTAVMKGLGSLSPEERPRMGQMVNTVKDRLETTLEETLQRVRAAAKKERLERERLDVTLPGRTSPLGTKHPISLVIEEISDIFAGLGFQVAEGPEVELDFYNFEALNFPKDHPARDMQDTFFVDDDILLRTHTSPVQVRTMLKHAPPVRIISPGTVYRCDSDATHSPMFHQIEGFMVDKGVTFGDLKGILTNFVNQFFGAGTGVRLRPSFFPFTEPSAEVDIACVMCKGQGCRVCKQSGWLEILGAGMIDPEVYRHVGYDPESISGFAFGMGIERVAMLKYGIGDLRLFFDNDVRFLQQFR.

A Mg(2+)-binding site is contributed by Glu253.

The protein belongs to the class-II aminoacyl-tRNA synthetase family. Phe-tRNA synthetase alpha subunit type 1 subfamily. As to quaternary structure, tetramer of two alpha and two beta subunits. Mg(2+) is required as a cofactor.

Its subcellular location is the cytoplasm. The enzyme catalyses tRNA(Phe) + L-phenylalanine + ATP = L-phenylalanyl-tRNA(Phe) + AMP + diphosphate + H(+). This is Phenylalanine--tRNA ligase alpha subunit from Geobacter sulfurreducens (strain ATCC 51573 / DSM 12127 / PCA).